Here is a 394-residue protein sequence, read N- to C-terminus: Myb-related protein 2 (394 aa).

Residues 42–102 (TDAKPRLKWT…HLQKYRLSKN (61 aa)) enclose the HTH myb-type domain. A DNA-binding region (H-T-H motif) is located at residues 73-98 (PKTIMKVMGIPGLTLYHLKSHLQKYR). The interval 148-168 (GEALQMQIEVQRRLHEQLEVQ) is coiled coil. The LHEQLE motif lies at 161-166 (LHEQLE). The interval 338–363 (LHGHKSQHQQGNNEDHKLETRNRKGM) is disordered. Over residues 350–363 (NEDHKLETRNRKGM) the composition is skewed to basic and acidic residues.

It belongs to the MYB-CC family. In terms of assembly, isoform 1: Homodimer. Isoform 3: Does not form homodimer. As to expression, expressed in phloem and/or cambium.

It is found in the nucleus. Functionally, transcriptional activator that may activate the transcription of specific genes involved in nitrogen uptake or assimilation. Acts redundantly with MYR1 as a repressor of flowering and organ elongation under decreased light intensity. Represses gibberellic acid (GA)-dependent responses and affects levels of bioactive GA. The sequence is that of Myb-related protein 2 from Arabidopsis thaliana (Mouse-ear cress).